Here is a 276-residue protein sequence, read N- to C-terminus: Diaminopimelate epimerase (276 aa).

Residues Asn-13, Gln-46, and Asn-66 each coordinate substrate. Cys-75 acts as the Proton donor in catalysis. Residues 76 to 77 (GN), Asn-159, Asn-192, and 210 to 211 (ER) contribute to the substrate site. The active-site Proton acceptor is Cys-219. 220–221 (GT) provides a ligand contact to substrate.

Belongs to the diaminopimelate epimerase family. Homodimer.

The protein resides in the cytoplasm. The enzyme catalyses (2S,6S)-2,6-diaminopimelate = meso-2,6-diaminopimelate. It participates in amino-acid biosynthesis; L-lysine biosynthesis via DAP pathway; DL-2,6-diaminopimelate from LL-2,6-diaminopimelate: step 1/1. Catalyzes the stereoinversion of LL-2,6-diaminopimelate (L,L-DAP) to meso-diaminopimelate (meso-DAP), a precursor of L-lysine and an essential component of the bacterial peptidoglycan. The protein is Diaminopimelate epimerase of Chromobacterium violaceum (strain ATCC 12472 / DSM 30191 / JCM 1249 / CCUG 213 / NBRC 12614 / NCIMB 9131 / NCTC 9757 / MK).